The primary structure comprises 260 residues: Flap endonuclease Xni (260 aa).

Position 105 (D105) interacts with Mg(2+). The 5'-3' exonuclease domain maps to 164–254; it reads SQFLDLLALA…LKDFRVNGPA (91 aa). Positions 172, 173, 181, 183, and 186 each coordinate K(+). The interaction with DNA stretch occupies residues 185–190; the sequence is GIGPKS.

This sequence belongs to the Xni family. Mg(2+) serves as cofactor. The cofactor is K(+).

Its function is as follows. Has flap endonuclease activity. During DNA replication, flap endonucleases cleave the 5'-overhanging flap structure that is generated by displacement synthesis when DNA polymerase encounters the 5'-end of a downstream Okazaki fragment. The protein is Flap endonuclease Xni of Shewanella sp. (strain ANA-3).